A 66-amino-acid chain; its full sequence is Large ribosomal subunit protein bL31 (66 aa).

Positions 16, 18, 36, and 39 each coordinate Zn(2+).

Belongs to the bacterial ribosomal protein bL31 family. Type A subfamily. As to quaternary structure, part of the 50S ribosomal subunit. Zn(2+) is required as a cofactor.

Its function is as follows. Binds the 23S rRNA. The polypeptide is Large ribosomal subunit protein bL31 (Geobacillus sp. (strain WCH70)).